The chain runs to 264 residues: Hydroxyethylthiazole kinase (264 aa).

M52 contacts substrate. ATP-binding residues include R127 and T173. G200 is a binding site for substrate.

This sequence belongs to the Thz kinase family. It depends on Mg(2+) as a cofactor.

It carries out the reaction 5-(2-hydroxyethyl)-4-methylthiazole + ATP = 4-methyl-5-(2-phosphooxyethyl)-thiazole + ADP + H(+). It functions in the pathway cofactor biosynthesis; thiamine diphosphate biosynthesis; 4-methyl-5-(2-phosphoethyl)-thiazole from 5-(2-hydroxyethyl)-4-methylthiazole: step 1/1. In terms of biological role, catalyzes the phosphorylation of the hydroxyl group of 4-methyl-5-beta-hydroxyethylthiazole (THZ). The chain is Hydroxyethylthiazole kinase from Pectobacterium atrosepticum (strain SCRI 1043 / ATCC BAA-672) (Erwinia carotovora subsp. atroseptica).